Here is a 235-residue protein sequence, read N- to C-terminus: Phosphatidylserine decarboxylase proenzyme (235 aa).

Serine 204 functions as the Schiff-base intermediate with substrate; via pyruvic acid in the catalytic mechanism. At serine 204 the chain carries Pyruvic acid (Ser); by autocatalysis.

The protein belongs to the phosphatidylserine decarboxylase family. PSD-A subfamily. As to quaternary structure, heterodimer of a large membrane-associated beta subunit and a small pyruvoyl-containing alpha subunit. Pyruvate is required as a cofactor. Post-translationally, is synthesized initially as an inactive proenzyme. Formation of the active enzyme involves a self-maturation process in which the active site pyruvoyl group is generated from an internal serine residue via an autocatalytic post-translational modification. Two non-identical subunits are generated from the proenzyme in this reaction, and the pyruvate is formed at the N-terminus of the alpha chain, which is derived from the carboxyl end of the proenzyme. The post-translation cleavage follows an unusual pathway, termed non-hydrolytic serinolysis, in which the side chain hydroxyl group of the serine supplies its oxygen atom to form the C-terminus of the beta chain, while the remainder of the serine residue undergoes an oxidative deamination to produce ammonia and the pyruvoyl prosthetic group on the alpha chain.

It is found in the cell membrane. The enzyme catalyses a 1,2-diacyl-sn-glycero-3-phospho-L-serine + H(+) = a 1,2-diacyl-sn-glycero-3-phosphoethanolamine + CO2. Its pathway is phospholipid metabolism; phosphatidylethanolamine biosynthesis; phosphatidylethanolamine from CDP-diacylglycerol: step 2/2. Catalyzes the formation of phosphatidylethanolamine (PtdEtn) from phosphatidylserine (PtdSer). This is Phosphatidylserine decarboxylase proenzyme from Mycobacterium sp. (strain JLS).